The chain runs to 274 residues: HTH-type transcriptional regulator GadX (274 aa).

An HTH araC/xylS-type domain is found at 145–242; sequence TRVCTVINNN…GMTPTEYQER (98 aa). 2 DNA-binding regions (H-T-H motif) span residues 162–183 and 209–232; these read ARIASELLMSPSLLKKKLREEE and IKRVAVSCGYHSVSYFIYVFRNYY.

Homodimer.

Functionally, positively regulates the expression of about fifteen genes involved in acid resistance such as gadA, gadB and gadC. Depending on the conditions (growth phase and medium), can repress gadW. This is HTH-type transcriptional regulator GadX (gadX) from Escherichia coli O157:H7.